Reading from the N-terminus, the 325-residue chain is Tumor necrosis factor soluble receptor (325 aa).

An N-terminal signal peptide occupies residues 1-16 (MLRLIALLVCVVYVYG). TNFR-Cys repeat units follow at residues 27–62 (KCGG…TVCS), 63–104 (PCED…DRVC), 105–147 (NCST…TLCE), and 148–186 (KCPP…TSCT). Intrachain disulfides connect Cys28–Cys39, Cys40–Cys53, Cys43–Cys61, Cys64–Cys79, Cys82–Cys96, and Cys86–Cys104. N-linked (GlcNAc...) asparagine; by host glycosylation occurs at Asn105. Intrachain disulfides connect Cys106–Cys120, Cys123–Cys146, Cys129–Cys149, and Cys164–Cys185. N-linked (GlcNAc...) asparagine; by host glycans are attached at residues Asn181, Asn205, and Asn238.

Binds to TNF-alpha and beta. Probably prevents TNF to reach cellular target and thereby deampening the potential antiviral effects of the cytokine. The sequence is that of Tumor necrosis factor soluble receptor from Oryctolagus cuniculus (Rabbit).